Here is a 276-residue protein sequence, read N- to C-terminus: MGTVTTSDGTNIFYKDWGPRDGLPVVFHHGWPLSADDWDNQMLFFLSHGYRVIAHDRRGHGRSDQPSTGHDMDTYAADVAALTEALDLRGAVHIGHSTGGGEVARYVARAEPGRVAKAVLVSAVPPVMVKSDTNPDGLPLEVFDEFRAALAANRAQFYIDVPSGPFYGFNREGATVSQGLIDHWWLQGMMGAANAHYECIAAFSETDFTDDLKRIDVPVLVAHGTDDQVVPYADAAPKSAELLANATLKSYEGLPHGMLSTHPEVLNPDLLAFVKS.

The AB hydrolase-1 domain occupies 24–254; sequence PVVFHHGWPL…NATLKSYEGL (231 aa). Catalysis depends on residues S97, D227, and H256.

Belongs to the AB hydrolase superfamily. Bacterial non-heme haloperoxidase / perhydrolase family. In terms of assembly, homodimer.

The sequence is that of Non-heme chloroperoxidase (cpo) from Streptomyces lividans.